Consider the following 166-residue polypeptide: Large ribosomal subunit protein uL10 (166 aa).

This sequence belongs to the universal ribosomal protein uL10 family. As to quaternary structure, part of the ribosomal stalk of the 50S ribosomal subunit. The N-terminus interacts with L11 and the large rRNA to form the base of the stalk. The C-terminus forms an elongated spine to which L12 dimers bind in a sequential fashion forming a multimeric L10(L12)X complex.

Its function is as follows. Forms part of the ribosomal stalk, playing a central role in the interaction of the ribosome with GTP-bound translation factors. This Listeria monocytogenes serotype 4b (strain CLIP80459) protein is Large ribosomal subunit protein uL10.